Here is a 166-residue protein sequence, read N- to C-terminus: Large ribosomal subunit protein mL49 (166 aa).

The segment at 56–78 (RIPDPPKHEHYPTPSGWQPPRDP) is disordered.

The protein belongs to the mitochondrion-specific ribosomal protein mL49 family. Component of the mitochondrial large ribosomal subunit (mt-LSU). Mature mammalian 55S mitochondrial ribosomes consist of a small (28S) and a large (39S) subunit. The 28S small subunit contains a 12S ribosomal RNA (12S mt-rRNA) and 30 different proteins. The 39S large subunit contains a 16S rRNA (16S mt-rRNA), a copy of mitochondrial valine transfer RNA (mt-tRNA(Val)), which plays an integral structural role, and 52 different proteins. Interacts with OXA1L. As to expression, ubiquitous.

The protein localises to the mitochondrion. The chain is Large ribosomal subunit protein mL49 (MRPL49) from Homo sapiens (Human).